We begin with the raw amino-acid sequence, 38 residues long: Large ribosomal subunit protein bL36 (38 aa).

This sequence belongs to the bacterial ribosomal protein bL36 family.

This Prochlorococcus marinus (strain MIT 9312) protein is Large ribosomal subunit protein bL36.